A 914-amino-acid polypeptide reads, in one-letter code: TRPM8 channel-associated factor 2 (914 aa).

Residues 541 to 840 form the Peptidase M60 domain; that stretch reads DAWMSTGLNL…TYLQLQEAFG (300 aa).

Belongs to the TCAF family. In terms of assembly, interacts with TRPM8 (via N-terminus and C-terminus domains); the interaction inhibits TRPM8 channel activity. Interacts with TRPV6.

The protein localises to the cell membrane. In terms of biological role, negatively regulates the plasma membrane cation channel TRPM8 activity. Involved in the recruitment of TRPM8 to the cell surface. Promotes prostate cancer cell migration stimulation in a TRPM8-dependent manner. This is TRPM8 channel-associated factor 2 from Bos taurus (Bovine).